The primary structure comprises 384 residues: MALNSITYQKCFHTSAQQYADNKNKKVIIGMSGGVDSSVSAFILQQQGYQVEGLFMKNWEEDDDTDYCTAAADLADAQNVADRLGIKLHKINFAAEYWDNVFEHFLAEYQAGRTPNPDILCNKEIKFKAFLEYAAEDLGADYIATGHYVRRSADNENAQLLRGLDANKDQSYFLYTLSNQQVAKSLFPVGEIEKPMVRQIATDLGLVTAKKKDSTGICFIGERKFKEFLARFLPAQPGDISTVEGEIVGRHDGLMYYTLGQRKGLGIGGVKGLSEDPFYVVEKDLVNNVLIVAQGHDNSALLSTGLIANQLHWVDRKTIGDTLRCTVKTRYRQTDIACLVEPIDAENIRVIFDEPQIAVTPGQSAVFYQGEVCLGGGVIEAQLK.

Residues 30–37 (GMSGGVDS) and methionine 56 each bind ATP. Positions 116–118 (NPD) are interaction with target base in tRNA. Cysteine 121 functions as the Nucleophile in the catalytic mechanism. A disulfide bridge links cysteine 121 with cysteine 218. Residue glycine 146 coordinates ATP. The tract at residues 168 to 170 (KDQ) is interaction with tRNA. Cysteine 218 functions as the Cysteine persulfide intermediate in the catalytic mechanism. The interval 330–331 (RY) is interaction with tRNA.

Belongs to the MnmA/TRMU family.

The protein localises to the cytoplasm. The catalysed reaction is S-sulfanyl-L-cysteinyl-[protein] + uridine(34) in tRNA + AH2 + ATP = 2-thiouridine(34) in tRNA + L-cysteinyl-[protein] + A + AMP + diphosphate + H(+). Its function is as follows. Catalyzes the 2-thiolation of uridine at the wobble position (U34) of tRNA, leading to the formation of s(2)U34. The protein is tRNA-specific 2-thiouridylase MnmA of Haemophilus ducreyi (strain 35000HP / ATCC 700724).